Consider the following 879-residue polypeptide: Protein translocase subunit SecA (879 aa).

ATP is bound by residues Q86, 104 to 108 (GEGKT), and D500. 4 residues coordinate Zn(2+): C863, C865, C874, and H875.

It belongs to the SecA family. Monomer and homodimer. Part of the essential Sec protein translocation apparatus which comprises SecA, SecYEG and auxiliary proteins SecDF-YajC and YidC. Zn(2+) serves as cofactor.

Its subcellular location is the cell inner membrane. It is found in the cytoplasm. The catalysed reaction is ATP + H2O + cellular proteinSide 1 = ADP + phosphate + cellular proteinSide 2.. Its function is as follows. Part of the Sec protein translocase complex. Interacts with the SecYEG preprotein conducting channel. Has a central role in coupling the hydrolysis of ATP to the transfer of proteins into and across the cell membrane, serving both as a receptor for the preprotein-SecB complex and as an ATP-driven molecular motor driving the stepwise translocation of polypeptide chains across the membrane. The sequence is that of Protein translocase subunit SecA from Orientia tsutsugamushi (strain Ikeda) (Rickettsia tsutsugamushi).